A 295-amino-acid polypeptide reads, in one-letter code: Pyridoxal 5'-phosphate synthase subunit PdxS (295 aa).

Residue Asp25 participates in D-ribose 5-phosphate binding. Lys82 (schiff-base intermediate with D-ribose 5-phosphate) is an active-site residue. Gly154 serves as a coordination point for D-ribose 5-phosphate. Residue Arg166 participates in D-glyceraldehyde 3-phosphate binding. Residues Gly215 and 236-237 (GS) each bind D-ribose 5-phosphate.

It belongs to the PdxS/SNZ family. As to quaternary structure, in the presence of PdxT, forms a dodecamer of heterodimers.

The enzyme catalyses aldehydo-D-ribose 5-phosphate + D-glyceraldehyde 3-phosphate + L-glutamine = pyridoxal 5'-phosphate + L-glutamate + phosphate + 3 H2O + H(+). It participates in cofactor biosynthesis; pyridoxal 5'-phosphate biosynthesis. In terms of biological role, catalyzes the formation of pyridoxal 5'-phosphate from ribose 5-phosphate (RBP), glyceraldehyde 3-phosphate (G3P) and ammonia. The ammonia is provided by the PdxT subunit. Can also use ribulose 5-phosphate and dihydroxyacetone phosphate as substrates, resulting from enzyme-catalyzed isomerization of RBP and G3P, respectively. The sequence is that of Pyridoxal 5'-phosphate synthase subunit PdxS from Bacillus cereus (strain Q1).